Here is a 454-residue protein sequence, read N- to C-terminus: UDP-N-acetylmuramoylalanine--D-glutamate ligase (454 aa).

Position 115 to 121 (115 to 121) interacts with ATP; the sequence is GTNGKTT.

Belongs to the MurCDEF family.

Its subcellular location is the cytoplasm. It carries out the reaction UDP-N-acetyl-alpha-D-muramoyl-L-alanine + D-glutamate + ATP = UDP-N-acetyl-alpha-D-muramoyl-L-alanyl-D-glutamate + ADP + phosphate + H(+). It functions in the pathway cell wall biogenesis; peptidoglycan biosynthesis. In terms of biological role, cell wall formation. Catalyzes the addition of glutamate to the nucleotide precursor UDP-N-acetylmuramoyl-L-alanine (UMA). This chain is UDP-N-acetylmuramoylalanine--D-glutamate ligase, found in Thermoanaerobacter sp. (strain X514).